Reading from the N-terminus, the 124-residue chain is UPF0102 protein Mmc1_3298 (124 aa).

Belongs to the UPF0102 family.

In Magnetococcus marinus (strain ATCC BAA-1437 / JCM 17883 / MC-1), this protein is UPF0102 protein Mmc1_3298.